We begin with the raw amino-acid sequence, 55 residues long: Potassium channel toxin alpha-KTX 12 Sp2 (55 aa).

Residues Met1 to Gly18 form the signal peptide. Disulfide bonds link Cys26-Cys46, Cys32-Cys51, and Cys36-Cys53.

Belongs to the short scorpion toxin superfamily. Potassium channel inhibitor family. Alpha-KTx 12 subfamily. As to expression, expressed by the venom gland.

It localises to the secreted. Blocks mouse voltage-gated potassium channels Kv1.3/KCNA3 (IC(50)=0.3-30 nM), when the channel is expressed in Jurkat T cells or in HEK293 cells. Also shows a weaker inhibition on mKv1.2/KCNA2 (IC(50)=56.9 nM) and mKv1.1/KCNA1 (IC(50)=485 nM). Probably through the inhibition of both Kv1.2/KCNA2 and Kv1.3/KCNA3, the toxin also reduces the free calcium concentration in Jurkat T cells, inhibits the activation of Jurkat T cells and reduces the release of inflammatory cytokines interleukin-2, showing a strong immunosuppressant effect. The protein is Potassium channel toxin alpha-KTX 12 Sp2 of Scorpiops pococki (Scorpion).